The sequence spans 216 residues: Cytidylate kinase (216 aa).

7 to 15 (GPSGTGKST) contributes to the ATP binding site.

This sequence belongs to the cytidylate kinase family. Type 1 subfamily.

The protein localises to the cytoplasm. It catalyses the reaction CMP + ATP = CDP + ADP. It carries out the reaction dCMP + ATP = dCDP + ADP. The polypeptide is Cytidylate kinase (Chlamydia trachomatis serovar L2 (strain ATCC VR-902B / DSM 19102 / 434/Bu)).